The chain runs to 122 residues: Large ribosomal subunit protein uL14 (122 aa).

It belongs to the universal ribosomal protein uL14 family. As to quaternary structure, part of the 50S ribosomal subunit. Forms a cluster with proteins L3 and L19. In the 70S ribosome, L14 and L19 interact and together make contacts with the 16S rRNA in bridges B5 and B8.

Functionally, binds to 23S rRNA. Forms part of two intersubunit bridges in the 70S ribosome. In Variovorax paradoxus (strain S110), this protein is Large ribosomal subunit protein uL14.